Reading from the N-terminus, the 273-residue chain is Undecaprenyl-diphosphatase (273 aa).

Transmembrane regions (helical) follow at residues 1-21 (MEPI…FLPV), 39-59 (PALF…LIVF), 63-83 (LGMM…GIAP), 92-112 (LKLA…GLGL), 118-138 (LFFS…LLWL), 165-185 (GLAV…GLFL), 195-215 (FSFL…AVDL), 225-245 (ATVL…KVLI), and 252-272 (RFYL…WIGM).

It belongs to the UppP family.

The protein resides in the cell inner membrane. It catalyses the reaction di-trans,octa-cis-undecaprenyl diphosphate + H2O = di-trans,octa-cis-undecaprenyl phosphate + phosphate + H(+). Functionally, catalyzes the dephosphorylation of undecaprenyl diphosphate (UPP). Confers resistance to bacitracin. In Desulfosudis oleivorans (strain DSM 6200 / JCM 39069 / Hxd3) (Desulfococcus oleovorans), this protein is Undecaprenyl-diphosphatase.